The chain runs to 268 residues: Undecaprenyl-diphosphatase (268 aa).

The next 8 helical transmembrane spans lie at 11–33 (FLGLIEGLTEFIPVSSTGHLLLI), 46–66 (FEVLIQLGAILAILSVYSAKL), 84–104 (LGVLVAFLPAAVIGALAHGFI), 107–127 (VLFETPMLVCIMLIVGGFILL), 144–164 (YPLPICLAIGFIQCLAMIPGV), 185–205 (AEFSFFLAMPTMAGAFAYDLF), 213–233 (FNDGALIVVGFIMAFISGVFV), and 246–266 (FALFGWWRLIVGSAGMAALII).

It belongs to the UppP family.

The protein localises to the cell inner membrane. The enzyme catalyses di-trans,octa-cis-undecaprenyl diphosphate + H2O = di-trans,octa-cis-undecaprenyl phosphate + phosphate + H(+). Its function is as follows. Catalyzes the dephosphorylation of undecaprenyl diphosphate (UPP). Confers resistance to bacitracin. The protein is Undecaprenyl-diphosphatase of Brucella suis (strain ATCC 23445 / NCTC 10510).